Reading from the N-terminus, the 350-residue chain is Uroporphyrinogen decarboxylase (350 aa).

Substrate contacts are provided by residues 23-27, D72, Y149, S204, and H318; that span reads RQAGR.

Belongs to the uroporphyrinogen decarboxylase family. Homodimer.

Its subcellular location is the cytoplasm. The enzyme catalyses uroporphyrinogen III + 4 H(+) = coproporphyrinogen III + 4 CO2. It functions in the pathway porphyrin-containing compound metabolism; protoporphyrin-IX biosynthesis; coproporphyrinogen-III from 5-aminolevulinate: step 4/4. In terms of biological role, catalyzes the decarboxylation of four acetate groups of uroporphyrinogen-III to yield coproporphyrinogen-III. This Carboxydothermus hydrogenoformans (strain ATCC BAA-161 / DSM 6008 / Z-2901) protein is Uroporphyrinogen decarboxylase.